The sequence spans 687 residues: Glycine--tRNA ligase beta subunit (687 aa).

The protein belongs to the class-II aminoacyl-tRNA synthetase family. In terms of assembly, tetramer of two alpha and two beta subunits.

The protein resides in the cytoplasm. The catalysed reaction is tRNA(Gly) + glycine + ATP = glycyl-tRNA(Gly) + AMP + diphosphate. This chain is Glycine--tRNA ligase beta subunit, found in Trichlorobacter lovleyi (strain ATCC BAA-1151 / DSM 17278 / SZ) (Geobacter lovleyi).